Here is a 159-residue protein sequence, read N- to C-terminus: Phosphopantetheine adenylyltransferase (159 aa).

Thr10 contacts substrate. ATP is bound by residues 10–11 (TF) and His18. Substrate contacts are provided by Lys42, Leu73, and Arg87. ATP contacts are provided by residues 88–90 (GLR), Glu98, and 123–129 (YSYVSGT).

This sequence belongs to the bacterial CoaD family. In terms of assembly, homohexamer. It depends on Mg(2+) as a cofactor.

The protein localises to the cytoplasm. The catalysed reaction is (R)-4'-phosphopantetheine + ATP + H(+) = 3'-dephospho-CoA + diphosphate. It functions in the pathway cofactor biosynthesis; coenzyme A biosynthesis; CoA from (R)-pantothenate: step 4/5. Its function is as follows. Reversibly transfers an adenylyl group from ATP to 4'-phosphopantetheine, yielding dephospho-CoA (dPCoA) and pyrophosphate. The chain is Phosphopantetheine adenylyltransferase from Coxiella burnetii (strain CbuK_Q154) (Coxiella burnetii (strain Q154)).